A 492-amino-acid polypeptide reads, in one-letter code: 2,3-bisphosphoglycerate-independent phosphoglycerate mutase (492 aa).

Residues D11 and S61 each coordinate Mn(2+). Catalysis depends on S61, which acts as the Phosphoserine intermediate. Substrate-binding positions include H118, R147–D148, R178, R184, R248–R251, and K320. The Mn(2+) site is built by D386, H390, D427, H428, and H445.

It belongs to the BPG-independent phosphoglycerate mutase family. In terms of assembly, monomer. It depends on Mn(2+) as a cofactor.

The catalysed reaction is (2R)-2-phosphoglycerate = (2R)-3-phosphoglycerate. Its pathway is carbohydrate degradation; glycolysis; pyruvate from D-glyceraldehyde 3-phosphate: step 3/5. Functionally, catalyzes the interconversion of 2-phosphoglycerate and 3-phosphoglycerate. This is 2,3-bisphosphoglycerate-independent phosphoglycerate mutase from Campylobacter jejuni subsp. jejuni serotype O:6 (strain 81116 / NCTC 11828).